The chain runs to 505 residues: RNA-splicing ligase RtcB homolog (505 aa).

Residues D119, C122, H227, and H259 each contribute to the Mn(2+) site. Residue 226-230 (NHYAE) participates in GMP binding. S300 carries the phosphoserine modification. Position 353 (H353) interacts with Mn(2+). Residues 353–354 (HN), 402–405 (GGTM), S409, and 428–431 (HGAG) contribute to the GMP site. H428 (GMP-histidine intermediate) is an active-site residue. Residue K496 forms a Glycyl lysine isopeptide (Lys-Gly) (interchain with G-Cter in SUMO2) linkage. K504 contributes to the GMP binding site.

Belongs to the RtcB family. As to quaternary structure, catalytic component of the tRNA-splicing ligase complex. It depends on Mn(2+) as a cofactor.

It localises to the nucleus. Its subcellular location is the cytoplasm. It catalyses the reaction a 3'-end 3'-phospho-ribonucleotide-RNA + a 5'-end dephospho-ribonucleoside-RNA + GTP = a ribonucleotidyl-ribonucleotide-RNA + GMP + diphosphate. It carries out the reaction a 3'-end 2',3'-cyclophospho-ribonucleotide-RNA + a 5'-end dephospho-ribonucleoside-RNA + GTP + H2O = a ribonucleotidyl-ribonucleotide-RNA + GMP + diphosphate + H(+). Protein archease stimulates the activity of the tRNA ligase complex with high efficiency in the presence of GTP. Its function is as follows. Catalytic subunit of the tRNA-splicing ligase complex that acts by directly joining spliced tRNA halves to mature-sized tRNAs by incorporating the precursor-derived splice junction phosphate into the mature tRNA as a canonical 3',5'-phosphodiester. May act as an RNA ligase with broad substrate specificity, and may function toward other RNAs. The polypeptide is RNA-splicing ligase RtcB homolog (Homo sapiens (Human)).